We begin with the raw amino-acid sequence, 300 residues long: Acetylglutamate kinase (300 aa).

Substrate contacts are provided by residues Gly-73–Gly-74, Arg-95, and Asn-197.

The protein belongs to the acetylglutamate kinase family. ArgB subfamily.

It is found in the cytoplasm. It carries out the reaction N-acetyl-L-glutamate + ATP = N-acetyl-L-glutamyl 5-phosphate + ADP. It participates in amino-acid biosynthesis; L-arginine biosynthesis; N(2)-acetyl-L-ornithine from L-glutamate: step 2/4. Catalyzes the ATP-dependent phosphorylation of N-acetyl-L-glutamate. This is Acetylglutamate kinase from Bordetella avium (strain 197N).